A 157-amino-acid chain; its full sequence is 6,7-dimethyl-8-ribityllumazine synthase (157 aa).

Residues Phe22, 56-58, and 81-83 each bind 5-amino-6-(D-ribitylamino)uracil; these read AFE and VLI. 86 to 87 lines the (2S)-2-hydroxy-3-oxobutyl phosphate pocket; the sequence is ET. His89 serves as the catalytic Proton donor. Phe114 provides a ligand contact to 5-amino-6-(D-ribitylamino)uracil. A (2S)-2-hydroxy-3-oxobutyl phosphate-binding site is contributed by Arg128.

The protein belongs to the DMRL synthase family.

The enzyme catalyses (2S)-2-hydroxy-3-oxobutyl phosphate + 5-amino-6-(D-ribitylamino)uracil = 6,7-dimethyl-8-(1-D-ribityl)lumazine + phosphate + 2 H2O + H(+). It functions in the pathway cofactor biosynthesis; riboflavin biosynthesis; riboflavin from 2-hydroxy-3-oxobutyl phosphate and 5-amino-6-(D-ribitylamino)uracil: step 1/2. Its function is as follows. Catalyzes the formation of 6,7-dimethyl-8-ribityllumazine by condensation of 5-amino-6-(D-ribitylamino)uracil with 3,4-dihydroxy-2-butanone 4-phosphate. This is the penultimate step in the biosynthesis of riboflavin. The sequence is that of 6,7-dimethyl-8-ribityllumazine synthase from Chlamydia trachomatis serovar L2 (strain ATCC VR-902B / DSM 19102 / 434/Bu).